The sequence spans 170 residues: Urease accessory protein UreE (170 aa).

This sequence belongs to the UreE family.

It localises to the cytoplasm. Functionally, involved in urease metallocenter assembly. Binds nickel. Probably functions as a nickel donor during metallocenter assembly. This is Urease accessory protein UreE from Helicobacter pylori (strain J99 / ATCC 700824) (Campylobacter pylori J99).